The chain runs to 198 residues: Cytokinin riboside 5'-monophosphate phosphoribohydrolase (198 aa).

Residues Glu91, 109–110, 126–132, and Thr138 each bind substrate; these read RK and GVGTAEE.

The protein belongs to the LOG family.

It catalyses the reaction N(6)-(dimethylallyl)adenosine 5'-phosphate + H2O = N(6)-dimethylallyladenine + D-ribose 5-phosphate. It carries out the reaction 9-ribosyl-trans-zeatin 5'-phosphate + H2O = trans-zeatin + D-ribose 5-phosphate. Functionally, catalyzes the hydrolytic removal of ribose 5'-monophosphate from nitrogen N6-modified adenosines, the final step of bioactive cytokinin synthesis. In Rhodococcoides fascians (Rhodococcus fascians), this protein is Cytokinin riboside 5'-monophosphate phosphoribohydrolase (fas6).